A 324-amino-acid polypeptide reads, in one-letter code: NADH-ubiquinone oxidoreductase chain 1 (324 aa).

9 consecutive transmembrane segments (helical) span residues 9 to 29, 43 to 63, 75 to 95, 106 to 126, 146 to 166, 177 to 197, 228 to 250, 259 to 279, and 299 to 319; these read ILNPLAFIVPVLLAVAFLTLL, PNIVGPYGLLQPIADGVKLFI, ILFILTPMLALTLAMTLWAPL, LAILLFVALSSLAVYSILGSG, ISYEVSLGLILLSLIIFTGGF, SIWLIIPAWPLAAMWYISTLA, LFFLAEYANILFMNTLSASLFLG, ELTTMNLMTKAAVLSLVFLWV, and FLPLTLALVIWHLALPITFAG.

It belongs to the complex I subunit 1 family.

It is found in the mitochondrion inner membrane. The enzyme catalyses a ubiquinone + NADH + 5 H(+)(in) = a ubiquinol + NAD(+) + 4 H(+)(out). Core subunit of the mitochondrial membrane respiratory chain NADH dehydrogenase (Complex I) that is believed to belong to the minimal assembly required for catalysis. Complex I functions in the transfer of electrons from NADH to the respiratory chain. The immediate electron acceptor for the enzyme is believed to be ubiquinone. This Tetraodon nigroviridis (Spotted green pufferfish) protein is NADH-ubiquinone oxidoreductase chain 1 (MT-ND1).